Consider the following 133-residue polypeptide: MVVSDPVADFLTRIRNGTKAQHRYVDVNWSKMKQTLAEILKNQGFIENYLVKVDEGQRGTIRIFLKYTNGRRPVIQGLKRISKPGLRKYVGHQDIPRFYGNMGLSIVSTSQGVMAGNEATQRGIGGELLCLIW.

Belongs to the universal ribosomal protein uS8 family. In terms of assembly, part of the 30S ribosomal subunit. Contacts proteins S5 and S12.

Its function is as follows. One of the primary rRNA binding proteins, it binds directly to 16S rRNA central domain where it helps coordinate assembly of the platform of the 30S subunit. This Protochlamydia amoebophila (strain UWE25) protein is Small ribosomal subunit protein uS8.